Here is a 154-residue protein sequence, read N- to C-terminus: OCIA domain-containing protein 2 (154 aa).

The tract at residues 1 to 23 (MASVSTHENQEKGPHLPPPSKQS) is disordered. The 120-residue stretch at 1–120 (MASVSTHENQ…HSFEGQLRGA (120 aa)) folds into the OCIA domain. Residue Lys-41 is modified to N6-acetyllysine.

Interacts (via OCIA domain) with OCIAD1/ASRIJ and STAT3.

Its subcellular location is the endosome. It is found in the mitochondrion. It localises to the mitochondrion inner membrane. In terms of biological role, has an essential role in the assembly of mitochondrial respiratory chain complex III. Is also required for STAT3 activation and plays a role in cell migration. The polypeptide is OCIA domain-containing protein 2 (OCIAD2) (Bos taurus (Bovine)).